The chain runs to 426 residues: Serine hydroxymethyltransferase 1 (426 aa).

Residues L121 and 125-127 (GHL) each bind (6S)-5,6,7,8-tetrahydrofolate. K230 carries the post-translational modification N6-(pyridoxal phosphate)lysine. Residue 355-357 (SPF) coordinates (6S)-5,6,7,8-tetrahydrofolate.

The protein belongs to the SHMT family. Homodimer. Pyridoxal 5'-phosphate serves as cofactor.

It is found in the cytoplasm. The enzyme catalyses (6R)-5,10-methylene-5,6,7,8-tetrahydrofolate + glycine + H2O = (6S)-5,6,7,8-tetrahydrofolate + L-serine. Its pathway is one-carbon metabolism; tetrahydrofolate interconversion. It participates in amino-acid biosynthesis; glycine biosynthesis; glycine from L-serine: step 1/1. Functionally, catalyzes the reversible interconversion of serine and glycine with tetrahydrofolate (THF) serving as the one-carbon carrier. This reaction serves as the major source of one-carbon groups required for the biosynthesis of purines, thymidylate, methionine, and other important biomolecules. Also exhibits THF-independent aldolase activity toward beta-hydroxyamino acids, producing glycine and aldehydes, via a retro-aldol mechanism. The protein is Serine hydroxymethyltransferase 1 of Hahella chejuensis (strain KCTC 2396).